Here is a 202-residue protein sequence, read N- to C-terminus: Lymphotoxin-alpha (202 aa).

Positions 1–33 (MTPLGRLHLLRVLSTPPVFLLGLLLALPLGAQG) are cleaved as a signal peptide. Residues 60 to 202 (PAAHLVGYPS…STVFFGAFAL (143 aa)) form the THD domain. A glycan (N-linked (GlcNAc...) asparagine) is linked at Asn-93.

This sequence belongs to the tumor necrosis factor family. As to quaternary structure, homotrimer, and heterotrimer of either two LTB and one LTA subunits or (less prevalent) two LTA and one LTB subunits. Interacts with TNFRSF14.

Its subcellular location is the secreted. The protein localises to the membrane. Functionally, cytokine that in its homotrimeric form binds to TNFRSF1A/TNFR1, TNFRSF1B/TNFBR and TNFRSF14/HVEM. In its heterotrimeric form with LTB binds to TNFRSF3/LTBR. Lymphotoxin is produced by lymphocytes and is cytotoxic for a wide range of tumor cells in vitro and in vivo. This chain is Lymphotoxin-alpha (Lta), found in Rattus norvegicus (Rat).